A 128-amino-acid chain; its full sequence is 3-aminoacrylate deaminase RutC (128 aa).

Belongs to the RutC family. In terms of assembly, homotrimer.

It carries out the reaction (Z)-3-aminoacrylate + H2O + H(+) = 3-oxopropanoate + NH4(+). In terms of biological role, involved in pyrimidine catabolism. Catalyzes the deamination of 3-aminoacrylate to malonic semialdehyde, a reaction that can also occur spontaneously. RutC may facilitate the reaction and modulate the metabolic fitness, rather than catalyzing essential functions. The sequence is that of 3-aminoacrylate deaminase RutC from Escherichia coli (strain SE11).